The primary structure comprises 415 residues: Gamma-glutamyl phosphate reductase (415 aa).

It belongs to the gamma-glutamyl phosphate reductase family.

It is found in the cytoplasm. The catalysed reaction is L-glutamate 5-semialdehyde + phosphate + NADP(+) = L-glutamyl 5-phosphate + NADPH + H(+). Its pathway is amino-acid biosynthesis; L-proline biosynthesis; L-glutamate 5-semialdehyde from L-glutamate: step 2/2. Its function is as follows. Catalyzes the NADPH-dependent reduction of L-glutamate 5-phosphate into L-glutamate 5-semialdehyde and phosphate. The product spontaneously undergoes cyclization to form 1-pyrroline-5-carboxylate. This chain is Gamma-glutamyl phosphate reductase, found in Bacillus cereus (strain AH187).